The primary structure comprises 290 residues: ATP synthase gamma chain (290 aa).

This sequence belongs to the ATPase gamma chain family. F-type ATPases have 2 components, CF(1) - the catalytic core - and CF(0) - the membrane proton channel. CF(1) has five subunits: alpha(3), beta(3), gamma(1), delta(1), epsilon(1). CF(0) has three main subunits: a, b and c.

The protein resides in the cell inner membrane. Its function is as follows. Produces ATP from ADP in the presence of a proton gradient across the membrane. The gamma chain is believed to be important in regulating ATPase activity and the flow of protons through the CF(0) complex. The protein is ATP synthase gamma chain of Gemmatimonas aurantiaca (strain DSM 14586 / JCM 11422 / NBRC 100505 / T-27).